We begin with the raw amino-acid sequence, 608 residues long: Chaperone protein DnaK (608 aa).

Position 175 is a phosphothreonine; by autocatalysis (Thr175).

Belongs to the heat shock protein 70 family.

Its function is as follows. Acts as a chaperone. The polypeptide is Chaperone protein DnaK (Finegoldia magna (strain ATCC 29328 / DSM 20472 / WAL 2508) (Peptostreptococcus magnus)).